Consider the following 359-residue polypeptide: MQTLADLLNTIPAIDPAAMSRAQRHIDGLLKPVGSLGRLEALAIQLAGMPGLNGIPHVGKKAVLVMCADHGVWEEGVAISPKEVTAIQAENMTRGTTGVCVLAAQAGANVHVIDVGIDTAEPIPGLINMRVARGSGNIASAPAMSRRQAVKLLLDVICYTRELAKNGVTLFGVGELGMANTTPAAAIVSTITGRAPEEVVGIGANLPTDKLANKIDVVRRAITLNQPNPQDGVDVLAKVGGFDLVGMAGVMLGAASCGLPVLLDGFLSYAAALAACQMSPAIKPYLIPSHLSAEKGARIALSHLGLEPYLNMEMRLGEGSGAALAMPIIEAACAIYNNMGELAASNIVLPGNTTSDLNS.

Glu318 serves as the catalytic Proton acceptor.

The protein belongs to the CobT family. Homodimer.

The catalysed reaction is 5,6-dimethylbenzimidazole + nicotinate beta-D-ribonucleotide = alpha-ribazole 5'-phosphate + nicotinate + H(+). Its pathway is nucleoside biosynthesis; alpha-ribazole biosynthesis; alpha-ribazole from 5,6-dimethylbenzimidazole: step 1/2. Its function is as follows. Catalyzes the synthesis of alpha-ribazole-5'-phosphate from nicotinate mononucleotide (NAMN) and 5,6-dimethylbenzimidazole (DMB). The polypeptide is Nicotinate-nucleotide--dimethylbenzimidazole phosphoribosyltransferase (Escherichia coli O8 (strain IAI1)).